Reading from the N-terminus, the 608-residue chain is Signal transduction histidine-protein kinase AtoS (608 aa).

Over 1 to 15 (MHYMKWIYPRRLRNQ) the chain is Cytoplasmic. A helical membrane pass occupies residues 16 to 36 (MILMAILMVIVPTLTIGYIVE). Over 37 to 189 (TEGRSAVLSE…DIRRQAWKMD (153 aa)) the chain is Periplasmic. A helical membrane pass occupies residues 190 to 210 (VRIIIVLTAGLLISLLLIVLF). The Cytoplasmic portion of the chain corresponds to 211–608 (SRRLSANIDI…PINPQGNQTV (398 aa)). An HAMP domain is found at 212–262 (RRLSANIDIITDGLSTLAQNIPTRLPQLPGEMGQISQSVNNLAQALRETRT). Residues 260 to 305 (TRTLNDLIIENAADGVIAIDRQGDVTTMNPAAEVITGYQRHELVGQ) form the PAS domain. One can recognise a PAC domain in the interval 326-382 (HGTEHVALEISFPGRDRTIELSVTTSRIHNTHGEMIGALVIFSDLTARKETQRRMAQ). One can recognise a Histidine kinase domain in the interval 395-602 (GVAHEVRNPL…TFTLILPINP (208 aa)). H398 bears the Phosphohistidine; by autocatalysis mark.

In terms of assembly, homodimer. Post-translationally, autophosphorylated. Each AtoS molecule may phosphorylate its partner within the dimer rather than phosphorylating itself.

It localises to the cell inner membrane. It catalyses the reaction ATP + protein L-histidine = ADP + protein N-phospho-L-histidine.. Functionally, member of the two-component regulatory system AtoS/AtoC. In the presence of acetoacetate, AtoS/AtoC stimulates the expression of the atoDAEB operon, leading to short chain fatty acid catabolism and activation of the poly-(R)-3-hydroxybutyrate (cPHB) biosynthetic pathway. Also induces the operon in response to spermidine. Involved in the regulation of motility and chemotaxis, via transcriptional induction of the flagellar regulon. AtoS is a membrane-associated kinase that phosphorylates and activates AtoC in response to environmental signals. In Escherichia coli (strain K12), this protein is Signal transduction histidine-protein kinase AtoS (atoS).